The primary structure comprises 236 residues: 28 kDa antigen (236 aa).

An N-terminal signal peptide occupies residues Met-1–Ala-22. The segment at Pro-76 to Leu-105 is disordered. Over residues Gly-94 to Leu-105 the composition is skewed to polar residues.

It to M.tuberculosis ERP.

This chain is 28 kDa antigen, found in Mycobacterium leprae (strain TN).